We begin with the raw amino-acid sequence, 270 residues long: Interleukin-1 beta (270 aa).

A propeptide spanning residues 1–118 (MATVPEPTSE…VYDDDAFVCD (118 aa)) is cleaved from the precursor.

It belongs to the IL-1 family. In terms of assembly, monomer. In its precursor form, weakly interacts with full-length MEFV; the mature cytokine does not interact at all. Interacts with integrins ITGAV:ITGBV and ITGA5:ITGB1; integrin-binding is required for IL1B signaling. Interacts with cargo receptor TMED10; the interaction is direct and is required for the secretion of IL1B mature form. Interacts with HSP90AB1; the interaction facilitates cargo translocation into the ERGIC. Interacts with HSP90B1; the interaction facilitates cargo translocation into the ERGIC.

The protein localises to the cytoplasm. Its subcellular location is the cytosol. The protein resides in the secreted. It localises to the lysosome. It is found in the extracellular exosome. Functionally, potent pro-inflammatory cytokine. Initially discovered as the major endogenous pyrogen, induces prostaglandin synthesis, neutrophil influx and activation, T-cell activation and cytokine production, B-cell activation and antibody production, and fibroblast proliferation and collagen production. Promotes Th17 differentiation of T-cells. Synergizes with IL12/interleukin-12 to induce IFNG synthesis from T-helper 1 (Th1) cells. Plays a role in angiogenesis by inducing VEGF production synergistically with TNF and IL6. Involved in transduction of inflammation downstream of pyroptosis: its mature form is specifically released in the extracellular milieu by passing through the gasdermin-D (GSDMD) pore. This is Interleukin-1 beta (IL1B) from Eumetopias jubatus (Steller sea lion).